A 340-amino-acid chain; its full sequence is Fructose-1,6-bisphosphatase class 1 (340 aa).

4 residues coordinate Mg(2+): E107, D126, L128, and D129. N215 is a binding site for substrate. E287 is a binding site for Mg(2+).

The protein belongs to the FBPase class 1 family. In terms of assembly, homotetramer. Requires Mg(2+) as cofactor.

It is found in the cytoplasm. The catalysed reaction is beta-D-fructose 1,6-bisphosphate + H2O = beta-D-fructose 6-phosphate + phosphate. The protein operates within carbohydrate biosynthesis; gluconeogenesis. The polypeptide is Fructose-1,6-bisphosphatase class 1 (Brucella canis (strain ATCC 23365 / NCTC 10854 / RM-666)).